A 459-amino-acid polypeptide reads, in one-letter code: Serine/threonine-protein kinase 12 (459 aa).

Residues 1–30 are disordered; the sequence is MEEDYQQPRFTIGRQSSMAPEKIPEPSVHS. ANK repeat units follow at residues 42 to 71, 75 to 104, and 108 to 137; these read DGGV…DANY, DDRT…EVDP, and WGST…KHPM. One can recognise a Protein kinase domain in the interval 102–417; that stretch reads VDPKDRWGST…EIIKRLESIL (316 aa). ATP is bound by residues 108–116 and Lys184; that span reads WGSTPFADA. Catalysis depends on Asp281, which acts as the Proton acceptor.

This sequence belongs to the protein kinase superfamily. Ser/Thr protein kinase family. As to quaternary structure, interacts with BLUS1, PHOT1 and PHOT2. As to expression, accumulates in leaves, stems, petioles and roots, especially in guard cells.

It is found in the cytoplasm. Its subcellular location is the cytosol. The catalysed reaction is L-seryl-[protein] + ATP = O-phospho-L-seryl-[protein] + ADP + H(+). It catalyses the reaction L-threonyl-[protein] + ATP = O-phospho-L-threonyl-[protein] + ADP + H(+). Functionally, serine/threonine protein kinase that phosphorylates proteins on serine and threonine residues. Mediates blue light-dependent stomatal opening in guard cells by promoting plasma membrane-type ATPases (AHA1 and AHA2) phosphorylation. This Arabidopsis thaliana (Mouse-ear cress) protein is Serine/threonine-protein kinase 12.